Consider the following 133-residue polypeptide: Exosome complex protein C1739.07 (133 aa).

The disordered stretch occupies residues V96–T133. Residues A102–N116 show a composition bias toward low complexity.

The protein belongs to the C1D family. Component of the exosome multienzyme ribonuclease complex. Interacts with cut3.

It is found in the cytoplasm. Its subcellular location is the nucleus. Its function is as follows. Required for exosome-dependent processing of pre-rRNA and small nucleolar RNA (snRNA) precursors. Involved in processing of 35S pre-rRNA at the A0, A1 and A2 sites. This is Exosome complex protein C1739.07 from Schizosaccharomyces pombe (strain 972 / ATCC 24843) (Fission yeast).